The primary structure comprises 233 residues: Phosphoglycolate phosphatase 2 (233 aa).

The active-site Nucleophile is Asp13. Mg(2+) is bound by residues Asp13 and Asp15. Lys152 lines the substrate pocket. Mg(2+) contacts are provided by Asp174 and Asp178.

The protein belongs to the archaeal SPP-like hydrolase family. Requires Mg(2+) as cofactor.

The enzyme catalyses 2-phosphoglycolate + H2O = glycolate + phosphate. Its function is as follows. Catalyzes the dephosphorylation of 2-phosphoglycolate. The protein is Phosphoglycolate phosphatase 2 of Saccharolobus solfataricus (strain ATCC 35092 / DSM 1617 / JCM 11322 / P2) (Sulfolobus solfataricus).